The sequence spans 539 residues: Prolyl 4-hydroxylase subunit alpha-2 (539 aa).

The signal sequence occupies residues 1–16 (MRAVLLVCLLAGLAHA). An N-linked (GlcNAc...) asparagine glycan is attached at asparagine 110. Residues 401-509 (TSEELQVANY…KWVSNKWIHE (109 aa)) form the Fe2OG dioxygenase domain. Histidine 419, aspartate 421, and histidine 490 together coordinate Fe cation. Residue lysine 500 coordinates 2-oxoglutarate.

The protein belongs to the P4HA family. As to quaternary structure, heterotetramer of two alpha chains and two beta chains. Exist either as a phy-2(2)/pdi-2(2) tetramer or as a phy-1/phy-2/pdi-2(2) tetramer. It depends on Fe(2+) as a cofactor. Requires L-ascorbate as cofactor.

It localises to the endoplasmic reticulum lumen. It catalyses the reaction L-prolyl-[collagen] + 2-oxoglutarate + O2 = trans-4-hydroxy-L-prolyl-[collagen] + succinate + CO2. Its function is as follows. Catalyzes the post-translational formation of 4-hydroxyproline in -Xaa-Pro-Gly- sequences in collagens and other proteins. This is Prolyl 4-hydroxylase subunit alpha-2 (phy-2) from Caenorhabditis elegans.